Consider the following 364-residue polypeptide: Cobalt-precorrin-5B C(1)-methyltransferase (364 aa).

Belongs to the CbiD family.

The enzyme catalyses Co-precorrin-5B + S-adenosyl-L-methionine = Co-precorrin-6A + S-adenosyl-L-homocysteine. It functions in the pathway cofactor biosynthesis; adenosylcobalamin biosynthesis; cob(II)yrinate a,c-diamide from sirohydrochlorin (anaerobic route): step 6/10. In terms of biological role, catalyzes the methylation of C-1 in cobalt-precorrin-5B to form cobalt-precorrin-6A. This chain is Cobalt-precorrin-5B C(1)-methyltransferase, found in Pseudomonas putida (strain W619).